The following is a 404-amino-acid chain: Histidinol dehydrogenase (404 aa).

Residues Tyr114, Gln176, and Asn199 each contribute to the NAD(+) site. Residues Ser222, Gln244, and His247 each contribute to the substrate site. Residues Gln244 and His247 each coordinate Zn(2+). Residues Glu300 and His301 each act as proton acceptor in the active site. Residues His301, Asp334, Glu388, and His393 each contribute to the substrate site. Residue Asp334 coordinates Zn(2+). His393 lines the Zn(2+) pocket.

Belongs to the histidinol dehydrogenase family. Zn(2+) serves as cofactor.

The catalysed reaction is L-histidinol + 2 NAD(+) + H2O = L-histidine + 2 NADH + 3 H(+). It participates in amino-acid biosynthesis; L-histidine biosynthesis; L-histidine from 5-phospho-alpha-D-ribose 1-diphosphate: step 9/9. Catalyzes the sequential NAD-dependent oxidations of L-histidinol to L-histidinaldehyde and then to L-histidine. In Archaeoglobus fulgidus (strain ATCC 49558 / DSM 4304 / JCM 9628 / NBRC 100126 / VC-16), this protein is Histidinol dehydrogenase (hisD).